A 282-amino-acid polypeptide reads, in one-letter code: Osteoclast-associated immunoglobulin-like receptor (282 aa).

Residues 1-18 (MALVLILQLLTLWPLCHT) form the signal peptide. Ig-like domains are found at residues 22-116 (PSVP…SQPS) and 126-219 (ELPR…SWEG). Residue Asn-48 is glycosylated (N-linked (GlcNAc...) asparagine). The cysteines at positions 53 and 100 are disulfide-linked. N-linked (GlcNAc...) asparagine glycosylation is present at Asn-145. Positions 221–282 (GPEARPASSA…PAPPPSDPGV (62 aa)) are disordered. Positions 273-282 (PAPPPSDPGV) are enriched in pro residues.

It belongs to the leukocyte receptor complex/polymeric immunoglobulin receptor (PIR/LRC) family.

It is found in the secreted. Its subcellular location is the cell membrane. Functionally, regulator of osteoclastogenesis which plays an important bone-specific function in osteoclast differentiation. This Homo sapiens (Human) protein is Osteoclast-associated immunoglobulin-like receptor (OSCAR).